Consider the following 211-residue polypeptide: Pyridoxine/pyridoxamine 5'-phosphate oxidase (211 aa).

Residues 7 to 10 (RREY) and Lys65 each bind substrate. FMN-binding positions include 60 to 65 (RIVLLK), 75 to 76 (YT), Arg81, Lys82, and Gln104. Substrate-binding residues include Tyr122, Arg126, and Ser130. FMN-binding positions include 139-140 (QS) and Trp184. 190–192 (RLH) contributes to the substrate binding site. An FMN-binding site is contributed by Arg194.

Belongs to the pyridoxamine 5'-phosphate oxidase family. As to quaternary structure, homodimer. FMN is required as a cofactor.

It carries out the reaction pyridoxamine 5'-phosphate + O2 + H2O = pyridoxal 5'-phosphate + H2O2 + NH4(+). The enzyme catalyses pyridoxine 5'-phosphate + O2 = pyridoxal 5'-phosphate + H2O2. Its pathway is cofactor metabolism; pyridoxal 5'-phosphate salvage; pyridoxal 5'-phosphate from pyridoxamine 5'-phosphate: step 1/1. The protein operates within cofactor metabolism; pyridoxal 5'-phosphate salvage; pyridoxal 5'-phosphate from pyridoxine 5'-phosphate: step 1/1. Catalyzes the oxidation of either pyridoxine 5'-phosphate (PNP) or pyridoxamine 5'-phosphate (PMP) into pyridoxal 5'-phosphate (PLP). The sequence is that of Pyridoxine/pyridoxamine 5'-phosphate oxidase from Vibrio atlanticus (strain LGP32) (Vibrio splendidus (strain Mel32)).